The primary structure comprises 248 residues: DNA repair protein RecO (248 aa).

Belongs to the RecO family.

In terms of biological role, involved in DNA repair and RecF pathway recombination. The sequence is that of DNA repair protein RecO from Oleidesulfovibrio alaskensis (strain ATCC BAA-1058 / DSM 17464 / G20) (Desulfovibrio alaskensis).